Consider the following 533-residue polypeptide: Atypical kinase COQ8B, mitochondrial (533 aa).

Residues 93 to 109 (LASFGGLAVGLGLGALA) form a helical membrane-spanning segment. The KxGQ motif signature appears at 156 to 159 (KIGQ). The 233-residue stretch at 192–424 (MMRVLEEELG…DRVLQKSQDL (233 aa)) folds into the Protein kinase domain. The AAAS motif motif lies at 217-220 (AAAS). ATP is bound by residues Ser-220, Lys-238, and 325 to 328 (MELA). Asp-368 functions as the Proton acceptor in the catalytic mechanism. Residues Asn-373 and Asp-387 each coordinate ATP.

Belongs to the protein kinase superfamily. ADCK protein kinase family. Homodimer; homodimerizes via its transmembrane region. Interacts with COQ6 and COQ7. Interacts with the multi-subunit COQ enzyme complex, composed of at least COQ3, COQ4, COQ5, COQ6, COQ7 and COQ9.

Its subcellular location is the mitochondrion membrane. The protein resides in the cytoplasm. It localises to the cytosol. It is found in the cell membrane. It functions in the pathway cofactor biosynthesis; ubiquinone biosynthesis. In terms of biological role, atypical kinase involved in the biosynthesis of coenzyme Q, also named ubiquinone, an essential lipid-soluble electron transporter for aerobic cellular respiration. Its substrate specificity is still unclear: may act as a protein kinase that mediates phosphorylation of COQ3. According to other reports, acts as a small molecule kinase, possibly a lipid kinase that phosphorylates a prenyl lipid in the ubiquinone biosynthesis pathway, as suggested by its ability to bind coenzyme Q lipid intermediates. However, the small molecule kinase activity was not confirmed by another publication. Required for podocyte migration. The sequence is that of Atypical kinase COQ8B, mitochondrial from Mus musculus (Mouse).